A 100-amino-acid chain; its full sequence is Urease subunit gamma (100 aa).

Belongs to the urease gamma subunit family. In terms of assembly, heterotrimer of UreA (gamma), UreB (beta) and UreC (alpha) subunits. Three heterotrimers associate to form the active enzyme.

It is found in the cytoplasm. The enzyme catalyses urea + 2 H2O + H(+) = hydrogencarbonate + 2 NH4(+). It participates in nitrogen metabolism; urea degradation; CO(2) and NH(3) from urea (urease route): step 1/1. The polypeptide is Urease subunit gamma (Photorhabdus laumondii subsp. laumondii (strain DSM 15139 / CIP 105565 / TT01) (Photorhabdus luminescens subsp. laumondii)).